A 241-amino-acid chain; its full sequence is Ribosome-recycling factor, mitochondrial (241 aa).

It belongs to the RRF family.

The protein resides in the mitochondrion. In terms of biological role, necessary for protein synthesis in mitochondria. Functions as a ribosome recycling factor in mitochondria. This Kluyveromyces lactis (strain ATCC 8585 / CBS 2359 / DSM 70799 / NBRC 1267 / NRRL Y-1140 / WM37) (Yeast) protein is Ribosome-recycling factor, mitochondrial (RRF1).